We begin with the raw amino-acid sequence, 177 residues long: Large ribosomal subunit protein uL6 (177 aa).

The protein belongs to the universal ribosomal protein uL6 family. As to quaternary structure, part of the 50S ribosomal subunit.

Functionally, this protein binds to the 23S rRNA, and is important in its secondary structure. It is located near the subunit interface in the base of the L7/L12 stalk, and near the tRNA binding site of the peptidyltransferase center. The protein is Large ribosomal subunit protein uL6 of Acinetobacter baylyi (strain ATCC 33305 / BD413 / ADP1).